Reading from the N-terminus, the 229-residue chain is MLFMCHQRVMKKEAEEKLKAEELRRARAAADIPIIWILGGPGCGKGTQCAKIVEKYGFTHLSSGDLLRNEVASGSDKGRQLQAVMASGGLVSNDEVLSLLNDAITRAKGSSKGFLIDGYPRQKNQGIEFEARIAPADLALYFECSEDTMVQRIMARAAASAVKRDDDNEKTIRARLLTFKQNTNAILELYEPKTLTINAERDVDDIFLEVVQAIDCVLKKKQQNAAAQC.

42–47 (GCGKGT) provides a ligand contact to ATP. Ser62 is subject to Phosphoserine. AMP is bound by residues Ser63, Arg68, 118-121 (GYPR), and Gln125. An ATP-binding site is contributed by Arg156. AMP is bound by residues Arg164 and Arg175.

It belongs to the adenylate kinase family. AK1 subfamily. In terms of tissue distribution, high expression levels in the thorax, suggesting a possible function in the gastrointestinal or reproductive systems.

The protein localises to the cytoplasm. The catalysed reaction is AMP + ATP = 2 ADP. Functionally, catalyzes the reversible transfer of the terminal phosphate group between ATP and AMP. Plays an important role in cellular energy homeostasis and in adenine nucleotide metabolism. The sequence is that of Adenylate kinase 1 from Drosophila melanogaster (Fruit fly).